We begin with the raw amino-acid sequence, 594 residues long: SHC-transforming protein 3 (594 aa).

The disordered stretch occupies residues 98 to 147 (GSCSAPSLAAPDGSAPSAPRAPAMSAARKGRPGDEPLPRPPRGAPHASDQ). Over residues 101–124 (SAPSLAAPDGSAPSAPRAPAMSAA) the composition is skewed to low complexity. The PID domain occupies 149–334 (LGPGVTYVVK…LDEPWTEEEG (186 aa)). A CH1 region spans residues 335 to 498 (DGSDHPYYNS…KMLEELQAET (164 aa)). 2 disordered regions span residues 351-373 (PPGG…AQFA) and 386-405 (GDTF…SSDI). A compositionally biased stretch (polar residues) spans 393–405 (WQQTPLRQGSSDI). Residue Ser-402 is modified to Phosphoserine. Residues 499 to 590 (WYQGEMSRKE…GSELCLQQPV (92 aa)) enclose the SH2 domain.

Interacts with the Trk receptors in a phosphotyrosine-dependent manner. Once activated, binds to GRB2. Interacts with activated EGF receptors. In terms of processing, tyrosine phosphorylated. As to expression, mainly expressed in brain. Hardly detectable in other tissues, except in pancreas. Highly expressed in the cerebral cortex, frontal and temporal lobes, occipital pole, hippocampus, caudate nucleus and amygdala. Expressed at low level in the cerebellum, medulla and spinal cord.

Its function is as follows. Signaling adapter that couples activated growth factor receptors to signaling pathway in neurons. Involved in the signal transduction pathways of neurotrophin-activated Trk receptors in cortical neurons. This is SHC-transforming protein 3 (SHC3) from Homo sapiens (Human).